Consider the following 578-residue polypeptide: Serine/threonine-protein kinase D6PKL3 (578 aa).

The segment covering 1–24 (MDSSSSVVYVGSSSKSRNFQSKSK) has biased composition (low complexity). Positions 1-64 (MDSSSSVVYV…EVIESSVSSV (64 aa)) are disordered. Residues 25 to 34 (GSITSFSIDS) show a composition bias toward polar residues. Residues 53–64 (SPEVIESSVSSV) show a composition bias toward low complexity. The region spanning 182–516 (FKLIKKLGGG…ATEIKQHPFF (335 aa)) is the Protein kinase domain. ATP-binding positions include 188–196 (LGGGDIGNV) and Lys211. Asp307 acts as the Proton acceptor in catalysis. The tract at residues 325–426 (DFDLSLRCAV…VGTHEYLAPE (102 aa)) is activation loop. The short motif at 575–578 (IDFF) is the PIF element.

This sequence belongs to the protein kinase superfamily. AGC Ser/Thr protein kinase family. In terms of tissue distribution, expressed predominantly in root tissue with lower levels found in leaf, stem, seed and flower.

It is found in the cell membrane. It catalyses the reaction L-seryl-[protein] + ATP = O-phospho-L-seryl-[protein] + ADP + H(+). It carries out the reaction L-threonyl-[protein] + ATP = O-phospho-L-threonyl-[protein] + ADP + H(+). Its function is as follows. Protein kinase that regulates the auxin transport activity of PIN auxin efflux facilitators by direct phosphorylation. D6PK-mediated PIN phosphorylation promotes auxin transport in the hypocotyl and this is a prerequisite for PHOT1-dependent hypocotyl bending. This is Serine/threonine-protein kinase D6PKL3 (D6PKL3) from Arabidopsis thaliana (Mouse-ear cress).